A 360-amino-acid polypeptide reads, in one-letter code: Photosystem II protein D1 (360 aa).

The next 3 helical transmembrane spans lie at 29–46 (YIGWFGVLMFPLLLTATT), 118–133 (HFLLGVACYMGREWEL), and 142–156 (WIAVAYSAPVAAATA). Residue H118 participates in chlorophyll a binding. Y126 provides a ligand contact to pheophytin a. [CaMn4O5] cluster is bound by residues D170 and E189. A helical transmembrane segment spans residues 197-218 (FHMMGVAGVFGGSLFSAMHGSL). A chlorophyll a-binding site is contributed by H198. A quinone contacts are provided by residues H215 and 264–265 (SF). Fe cation is bound at residue H215. H272 is a Fe cation binding site. A helical membrane pass occupies residues 274-288 (FLALWPVVGIWFTAL). [CaMn4O5] cluster contacts are provided by H332, E333, D342, and A344. A propeptide spanning residues 345–360 (SGEVMPVALTAPSINA) is cleaved from the precursor.

It belongs to the reaction center PufL/M/PsbA/D family. As to quaternary structure, PSII is composed of 1 copy each of membrane proteins PsbA, PsbB, PsbC, PsbD, PsbE, PsbF, PsbH, PsbI, PsbJ, PsbK, PsbL, PsbM, PsbT, PsbX, PsbY, PsbZ, Psb30/Ycf12, at least 3 peripheral proteins of the oxygen-evolving complex and a large number of cofactors. It forms dimeric complexes. It depends on The D1/D2 heterodimer binds P680, chlorophylls that are the primary electron donor of PSII, and subsequent electron acceptors. It shares a non-heme iron and each subunit binds pheophytin, quinone, additional chlorophylls, carotenoids and lipids. D1 provides most of the ligands for the Mn4-Ca-O5 cluster of the oxygen-evolving complex (OEC). There is also a Cl(-1) ion associated with D1 and D2, which is required for oxygen evolution. The PSII complex binds additional chlorophylls, carotenoids and specific lipids. as a cofactor. Post-translationally, tyr-161 forms a radical intermediate that is referred to as redox-active TyrZ, YZ or Y-Z. C-terminally processed by CTPA; processing is essential to allow assembly of the oxygen-evolving complex and thus photosynthetic growth.

It is found in the plastid. Its subcellular location is the cyanelle thylakoid membrane. The enzyme catalyses 2 a plastoquinone + 4 hnu + 2 H2O = 2 a plastoquinol + O2. Its function is as follows. Photosystem II (PSII) is a light-driven water:plastoquinone oxidoreductase that uses light energy to abstract electrons from H(2)O, generating O(2) and a proton gradient subsequently used for ATP formation. It consists of a core antenna complex that captures photons, and an electron transfer chain that converts photonic excitation into a charge separation. The D1/D2 (PsbA/PsbD) reaction center heterodimer binds P680, the primary electron donor of PSII as well as several subsequent electron acceptors. The sequence is that of Photosystem II protein D1 from Cyanophora paradoxa.